Reading from the N-terminus, the 1058-residue chain is Carbamoyl phosphate synthase large chain (1058 aa).

The interval Met1–Glu401 is carboxyphosphate synthetic domain. The ATP site is built by Arg129, Arg169, Gly175, Gly176, Arg208, Ile210, Glu215, Gly241, Ile242, His243, Gln284, and Glu298. One can recognise an ATP-grasp 1 domain in the interval Lys133 to Val327. Residues Gln284, Glu298, and Asn300 each coordinate Mg(2+). Residues Gln284, Glu298, and Asn300 each contribute to the Mn(2+) site. Positions Ile402–Ser546 are oligomerization domain. Residues Val547–Asn929 form a carbamoyl phosphate synthetic domain region. Residues Glu671–Leu861 form the ATP-grasp 2 domain. ATP-binding residues include Arg707, Ser746, Ile748, Glu752, Gly777, Val778, His779, Ser780, Gln820, and Glu832. 3 residues coordinate Mg(2+): Gln820, Glu832, and Asn834. Positions 820, 832, and 834 each coordinate Mn(2+). One can recognise an MGS-like domain in the interval Ser930 to Ile1058. The interval Ser930–Ile1058 is allosteric domain.

Belongs to the CarB family. As to quaternary structure, composed of two chains; the small (or glutamine) chain promotes the hydrolysis of glutamine to ammonia, which is used by the large (or ammonia) chain to synthesize carbamoyl phosphate. Tetramer of heterodimers (alpha,beta)4. Mg(2+) is required as a cofactor. It depends on Mn(2+) as a cofactor.

The catalysed reaction is hydrogencarbonate + L-glutamine + 2 ATP + H2O = carbamoyl phosphate + L-glutamate + 2 ADP + phosphate + 2 H(+). It carries out the reaction hydrogencarbonate + NH4(+) + 2 ATP = carbamoyl phosphate + 2 ADP + phosphate + 2 H(+). Its pathway is amino-acid biosynthesis; L-arginine biosynthesis; carbamoyl phosphate from bicarbonate: step 1/1. The protein operates within pyrimidine metabolism; UMP biosynthesis via de novo pathway; (S)-dihydroorotate from bicarbonate: step 1/3. Its function is as follows. Large subunit of the glutamine-dependent carbamoyl phosphate synthetase (CPSase). CPSase catalyzes the formation of carbamoyl phosphate from the ammonia moiety of glutamine, carbonate, and phosphate donated by ATP, constituting the first step of 2 biosynthetic pathways, one leading to arginine and/or urea and the other to pyrimidine nucleotides. The large subunit (synthetase) binds the substrates ammonia (free or transferred from glutamine from the small subunit), hydrogencarbonate and ATP and carries out an ATP-coupled ligase reaction, activating hydrogencarbonate by forming carboxy phosphate which reacts with ammonia to form carbamoyl phosphate. The chain is Carbamoyl phosphate synthase large chain from Streptococcus pyogenes serotype M5 (strain Manfredo).